We begin with the raw amino-acid sequence, 378 residues long: Glutamate 5-kinase (378 aa).

Residue lysine 14 participates in ATP binding. The substrate site is built by serine 54, aspartate 141, and asparagine 153. An ATP-binding site is contributed by 173-174; that stretch reads SD. Residues 279 to 356 enclose the PUA domain; it reads AGRLTVDAGA…DEISEILGYD (78 aa).

This sequence belongs to the glutamate 5-kinase family.

Its subcellular location is the cytoplasm. It catalyses the reaction L-glutamate + ATP = L-glutamyl 5-phosphate + ADP. It participates in amino-acid biosynthesis; L-proline biosynthesis; L-glutamate 5-semialdehyde from L-glutamate: step 1/2. In terms of biological role, catalyzes the transfer of a phosphate group to glutamate to form L-glutamate 5-phosphate. This is Glutamate 5-kinase from Brucella anthropi (strain ATCC 49188 / DSM 6882 / CCUG 24695 / JCM 21032 / LMG 3331 / NBRC 15819 / NCTC 12168 / Alc 37) (Ochrobactrum anthropi).